The chain runs to 443 residues: Probable glycine dehydrogenase (decarboxylating) subunit 1 (443 aa).

This sequence belongs to the GcvP family. N-terminal subunit subfamily. As to quaternary structure, the glycine cleavage system is composed of four proteins: P, T, L and H. In this organism, the P 'protein' is a heterodimer of two subunits.

The catalysed reaction is N(6)-[(R)-lipoyl]-L-lysyl-[glycine-cleavage complex H protein] + glycine + H(+) = N(6)-[(R)-S(8)-aminomethyldihydrolipoyl]-L-lysyl-[glycine-cleavage complex H protein] + CO2. Functionally, the glycine cleavage system catalyzes the degradation of glycine. The P protein binds the alpha-amino group of glycine through its pyridoxal phosphate cofactor; CO(2) is released and the remaining methylamine moiety is then transferred to the lipoamide cofactor of the H protein. In Solidesulfovibrio magneticus (strain ATCC 700980 / DSM 13731 / RS-1) (Desulfovibrio magneticus), this protein is Probable glycine dehydrogenase (decarboxylating) subunit 1.